Reading from the N-terminus, the 401-residue chain is Argininosuccinate synthase (401 aa).

ATP is bound at residue 8-16 (AYSGGLDTT). Residue Tyr-87 participates in L-citrulline binding. Gly-117 is a binding site for ATP. The L-aspartate site is built by Thr-119, Asn-123, and Asp-124. An L-citrulline-binding site is contributed by Asn-123. L-citrulline contacts are provided by Arg-127, Ser-175, Glu-259, and Tyr-271.

The protein belongs to the argininosuccinate synthase family. Type 1 subfamily. Homotetramer.

It localises to the cytoplasm. It carries out the reaction L-citrulline + L-aspartate + ATP = 2-(N(omega)-L-arginino)succinate + AMP + diphosphate + H(+). Its pathway is amino-acid biosynthesis; L-arginine biosynthesis; L-arginine from L-ornithine and carbamoyl phosphate: step 2/3. This Corynebacterium glutamicum (strain ATCC 13032 / DSM 20300 / JCM 1318 / BCRC 11384 / CCUG 27702 / LMG 3730 / NBRC 12168 / NCIMB 10025 / NRRL B-2784 / 534) protein is Argininosuccinate synthase.